The following is a 980-amino-acid chain: Alanine--tRNA ligase, mitochondrial (980 aa).

A mitochondrion-targeting transit peptide spans 1 to 23; the sequence is MAVALAAAAGKLRRAIGRSCPWQ. ATP is bound by residues R105, H123, W205, and 235 to 237; that span reads LWN. Positions 237 and 260 each coordinate L-alanine. G264 contacts ATP. Positions 627, 631, 744, and 748 each coordinate Zn(2+).

This sequence belongs to the class-II aminoacyl-tRNA synthetase family. In terms of assembly, monomer. Requires Zn(2+) as cofactor.

It is found in the mitochondrion. It catalyses the reaction tRNA(Ala) + L-alanine + ATP = L-alanyl-tRNA(Ala) + AMP + diphosphate. It carries out the reaction (S)-lactate + ATP + H(+) = (S)-lactoyl-AMP + diphosphate. The enzyme catalyses (S)-lactoyl-AMP + L-lysyl-[protein] = N(6)-[(S)-lactoyl]-L-lysyl-[protein] + AMP + 2 H(+). In terms of biological role, catalyzes the attachment of alanine to tRNA(Ala) in a two-step reaction: alanine is first activated by ATP to form Ala-AMP and then transferred to the acceptor end of tRNA(Ala). Also edits incorrectly charged tRNA(Ala) via its editing domain. In presence of high levels of lactate, also acts as a protein lactyltransferase that mediates lactylation of lysine residues in target proteins, such as CGAS. Acts as an inhibitor of cGAS/STING signaling by catalyzing lactylation of CGAS, preventing the formation of liquid-like droplets in which CGAS is activated. The chain is Alanine--tRNA ligase, mitochondrial (Aars2) from Mus musculus (Mouse).